The sequence spans 85 residues: U4-theraphotoxin-Hhn1p (85 aa).

A signal peptide spans 1-22 (MKMTLIAIPTCAAVLVLHTTAA). Residues 23–48 (EELEAESQLMEVGMPDTELEAVDGER) constitute a propeptide that is removed on maturation. Cystine bridges form between Cys52/Cys66, Cys56/Cys77, and Cys71/Cys82.

The protein belongs to the neurotoxin 12 (Hwtx-2) family. 02 (Hwtx-2) subfamily. In terms of tissue distribution, expressed by the venom gland.

The protein resides in the secreted. In terms of biological role, postsynaptic neurotoxin. In Cyriopagopus hainanus (Chinese bird spider), this protein is U4-theraphotoxin-Hhn1p.